A 139-amino-acid polypeptide reads, in one-letter code: Transcription antitermination protein NusB (139 aa).

Belongs to the NusB family.

In terms of biological role, involved in transcription antitermination. Required for transcription of ribosomal RNA (rRNA) genes. Binds specifically to the boxA antiterminator sequence of the ribosomal RNA (rrn) operons. The chain is Transcription antitermination protein NusB from Escherichia coli (strain K12 / MC4100 / BW2952).